A 615-amino-acid polypeptide reads, in one-letter code: Hypermethylated in cancer 2 protein (615 aa).

The region spanning 46 to 109 is the BTB domain; sequence CDVIIMVENS…IYTGKLLPSD (64 aa). The disordered stretch occupies residues 144 to 167; the sequence is KPFGSGRAGSTGMGRPPRSQRLST. 3 positions are modified to phosphoserine: serine 166, serine 169, and serine 197. 2 disordered regions span residues 182–208 and 229–421; these read RKGA…GSNQ and GCSS…SGHA. Residues 246-250 are binding to CtBP; it reads GLDLS. Residues 280–296 are compositionally biased toward low complexity; that stretch reads SPPAASAPPVANSASYS. Over residues 336–356 the composition is skewed to basic and acidic residues; sequence KKEWGKKEPVAGSPFERREAG. Position 348 is a phosphoserine (serine 348). Residues 379–388 are compositionally biased toward low complexity; that stretch reads ASGAGPSGPY. A Phosphoserine modification is found at serine 412. 5 C2H2-type zinc fingers span residues 442 to 469, 505 to 532, 533 to 560, 561 to 588, and 589 to 615; these read YVCI…EEEL, FKCS…LTRP, FPCN…GLKP, FACD…GEKP, and YECQ…TSPS.

Belongs to the krueppel C2H2-type zinc-finger protein family. Hic subfamily. In terms of assembly, self-associates. Interacts with HIC1. Highest levels in cerebellum.

It is found in the nucleus. Transcriptional repressor. This is Hypermethylated in cancer 2 protein (HIC2) from Homo sapiens (Human).